A 110-amino-acid chain; its full sequence is PCNA-associated factor (110 aa).

Residue lysine 15 forms a Glycyl lysine isopeptide (Lys-Gly) (interchain with G-Cter in ubiquitin) linkage. Positions 23-34 (RKVLGSSTFVTN) match the D-box motif. Residue lysine 24 is modified to N6-acetyllysine; alternate. A Glycyl lysine isopeptide (Lys-Gly) (interchain with G-Cter in ubiquitin); alternate cross-link involves residue lysine 24. A phosphoserine mark is found at serine 28 and serine 71. Low complexity predominate over residues 28–39 (SSTFVTNSSSSS). Positions 28–110 (SSTFVTNSSS…QPDHRDDENE (83 aa)) are disordered. The PIP-box motif lies at 61–71 (QKGIGEFFRLS). The segment covering 71-80 (SPKESKKENQ) has biased composition (basic and acidic residues). The short motif at 77–79 (KEN) is the KEN box element. An Initiation motif motif is present at residues 84–96 (EAGTSGLGKAKRK).

As to quaternary structure, interacts (when monoubiquitinated at Lys-15 and Lys-24) with PCNA. Interacts with isoform 2/p33ING1b of ING1. Interacts with BRCA1. Monoubiquitinated at Lys-15 and Lys-24 during normal S phase, promoting its association with PCNA. Also diubiquitinated at these 2 sites. Following DNA damage, monoubiquitin chains at Lys-15 and Lys-24 are probably extended, leading to disrupt the interaction with PCNA. Polyubiquitinated by the APC/C complex at the mitotic exit, leading to its degradation by the proteasome.

It is found in the nucleus. The protein localises to the cytoplasm. Its subcellular location is the perinuclear region. In terms of biological role, PCNA-binding protein that acts as a regulator of DNA repair during DNA replication. Following DNA damage, the interaction with PCNA is disrupted, facilitating the interaction between monoubiquitinated PCNA and the translesion DNA synthesis DNA polymerase eta (POLH) at stalled replisomes, facilitating the bypass of replication-fork-blocking lesions. Also acts as a regulator of centrosome number. This is PCNA-associated factor from Mus musculus (Mouse).